A 464-amino-acid chain; its full sequence is tRNA-2-methylthio-N(6)-dimethylallyladenosine synthase (464 aa).

An MTTase N-terminal domain is found at 4–119 (RTFHIMTFGC…APQAIERLVQ (116 aa)). [4Fe-4S] cluster-binding residues include Cys-13, Cys-48, Cys-82, Cys-158, Cys-162, and Cys-165. The Radical SAM core domain maps to 144 to 375 (GEVPVSAYVN…QEVQNEYSEA (232 aa)). The TRAM domain occupies 378–461 (QAMVGKTVMV…KHSLTGEPAG (84 aa)). A disordered region spans residues 393–420 (SPKSAAGSGTDAQNAAEESGRTASSWQG).

It belongs to the methylthiotransferase family. MiaB subfamily. In terms of assembly, monomer. It depends on [4Fe-4S] cluster as a cofactor.

It localises to the cytoplasm. It carries out the reaction N(6)-dimethylallyladenosine(37) in tRNA + (sulfur carrier)-SH + AH2 + 2 S-adenosyl-L-methionine = 2-methylsulfanyl-N(6)-dimethylallyladenosine(37) in tRNA + (sulfur carrier)-H + 5'-deoxyadenosine + L-methionine + A + S-adenosyl-L-homocysteine + 2 H(+). Its function is as follows. Catalyzes the methylthiolation of N6-(dimethylallyl)adenosine (i(6)A), leading to the formation of 2-methylthio-N6-(dimethylallyl)adenosine (ms(2)i(6)A) at position 37 in tRNAs that read codons beginning with uridine. This chain is tRNA-2-methylthio-N(6)-dimethylallyladenosine synthase, found in Oleidesulfovibrio alaskensis (strain ATCC BAA-1058 / DSM 17464 / G20) (Desulfovibrio alaskensis).